The primary structure comprises 105 residues: uncharacterized protein (105 aa).

The 91-residue stretch at 14-104 folds into the ABM domain; it reads HYITACLKII…VEWLMKSNVN (91 aa).

This is an uncharacterized protein from Bacillus subtilis (strain 168).